The following is a 246-amino-acid chain: Acetoacetyl-CoA reductase (246 aa).

NADP(+) is bound by residues 13–15, glycine 35, arginine 40, 60–62, and 88–92; these read GGI, GNV, and NAGIT. Substrate-binding positions include aspartate 94 and 147–150; that span reads QFGQ. The active-site Proton acceptor is the tyrosine 153. Residue 183–186 participates in NADP(+) binding; sequence PGYI. Substrate is bound by residues 184-185 and arginine 195; that span reads GY.

Belongs to the short-chain dehydrogenases/reductases (SDR) family. Homotetramer.

The protein localises to the cytoplasm. It carries out the reaction a (3R)-3-hydroxyacyl-CoA + NADP(+) = a 3-oxoacyl-CoA + NADPH + H(+). The enzyme catalyses (3R)-3-hydroxybutanoyl-CoA + NADP(+) = acetoacetyl-CoA + NADPH + H(+). Its pathway is biopolymer metabolism; poly-(R)-3-hydroxybutanoate biosynthesis. Catalyzes the chiral reduction of acetoacetyl-CoA to (R)-3-hydroxybutyryl-CoA. Is involved in the biosynthesis of polyhydroxybutyrate (PHB), which is accumulated as an intracellular energy reserve material when cells grow under conditions of nutrient limitation. This is Acetoacetyl-CoA reductase from Cupriavidus necator (strain ATCC 17699 / DSM 428 / KCTC 22496 / NCIMB 10442 / H16 / Stanier 337) (Ralstonia eutropha).